Here is a 215-residue protein sequence, read N- to C-terminus: Autophagy-related protein 101 (215 aa).

The tract at residues 124–147 (PVGKSHHSKLVMDPGEASEERSSR) is disordered.

Belongs to the ATG101 family. Interacts with ATG11 and ATG13A.

Its subcellular location is the cytoplasmic vesicle. It localises to the autophagosome. Functionally, accessory protein involved in autophagy. Acts as a scaffold protein of the ATG1-ATG13 complex for faithful delivery of autophagic vesicles to the vacuole. Required for selective mitophagy. The polypeptide is Autophagy-related protein 101 (Arabidopsis thaliana (Mouse-ear cress)).